Here is a 283-residue protein sequence, read N- to C-terminus: Protein FDD123 (283 aa).

7 consecutive transmembrane segments (helical) span residues 24 to 44 (WLWA…AWTF), 52 to 72 (LFHQ…FSMA), 97 to 117 (YIQW…ATGL), 122 to 142 (IFTT…AALV), 148 to 168 (WGYY…LLWH), 185 to 205 (ILAA…WACA), and 217 to 237 (MIWY…FFLW).

It belongs to the archaeal/bacterial/fungal opsin family.

It is found in the membrane. This is Protein FDD123 (FDD123) from Trametes versicolor (White-rot fungus).